A 312-amino-acid polypeptide reads, in one-letter code: Olfactory receptor 1D5 (312 aa).

Residues 1–25 (MDGDNQSENSQFLLLGISESPEQQR) are Extracellular-facing. Residue Asn5 is glycosylated (N-linked (GlcNAc...) asparagine). A helical transmembrane segment spans residues 26–49 (ILFWMFLSMYLVTVLGNVLIILAI). The Cytoplasmic segment spans residues 50–57 (SSDSHLHT). Residues 58 to 79 (PMYFFLANLSFTDLFFVTNTIP) form a helical membrane-spanning segment. The Extracellular segment spans residues 80–100 (KMLVNFQSQNKAISYAGCLTQ). Cys97 and Cys189 form a disulfide bridge. The chain crosses the membrane as a helical span at residues 101 to 120 (LYFLVSLVTLDNLILAVMAY). Residues 121–140 (DRYVATCCPLHYVTAMSPGL) lie on the Cytoplasmic side of the membrane. The helical transmembrane segment at 141 to 158 (CVLLLSLCWGLSVLYGLL) threads the bilayer. The Extracellular segment spans residues 159 to 196 (LTFLLTRVTFCGPREIHYLFCDMYILLWLACSNTHIIH). The chain crosses the membrane as a helical span at residues 197–220 (TALIATGCFIFLTPLGFMTTSYVR). Residues 221–237 (IVRTILQMPSASKKYKT) lie on the Cytoplasmic side of the membrane. The chain crosses the membrane as a helical span at residues 238–260 (FSTCASHLGVVSLFYGTLAMVYL). Over 261-271 (QPLHTYSMKDS) the chain is Extracellular. Residues 272–291 (VATVMYAVLTPMMNPFIYRL) traverse the membrane as a helical segment. Topologically, residues 292–312 (RNKDMHGAPGRVLWRPFQRPK) are cytoplasmic.

It belongs to the G-protein coupled receptor 1 family.

It localises to the cell membrane. Functionally, odorant receptor. The polypeptide is Olfactory receptor 1D5 (OR1D5) (Homo sapiens (Human)).